The following is a 970-amino-acid chain: N-alpha-acetyltransferase 25, NatB auxiliary subunit (970 aa).

TPR repeat units lie at residues 11–44 (NDRR…HRDL), 45–78 (HCAK…EPTD), 79–112 (DNSL…VPNS), and 114–146 (EYHS…VPKN).

The protein belongs to the MDM20/NAA25 family. Component of the N-terminal acetyltransferase B (NatB) complex which is composed of NAA20 and NAA25.

The protein localises to the cytoplasm. In terms of biological role, non-catalytic subunit of the NatB complex which catalyzes acetylation of the N-terminal methionine residues of peptides beginning with Met-Asp, Met-Glu, Met-Asn and Met-Gln. May play a role in normal cell-cycle progression. The protein is N-alpha-acetyltransferase 25, NatB auxiliary subunit (Naa25) of Rattus norvegicus (Rat).